A 650-amino-acid polypeptide reads, in one-letter code: SUMO-activating enzyme subunit 2 (650 aa).

Residues Gly25–Gly30, Asp49, Asn57–Arg60, Lys73, Ser96–Ile97, and Asp118–Arg123 contribute to the ATP site. The Zn(2+) site is built by Cys159 and Cys162. Cys174 functions as the Glycyl thioester intermediate in the catalytic mechanism. Residue Lys191 forms a Glycyl lysine isopeptide (Lys-Gly) (interchain with G-Cter in SUMO) linkage. Residue Lys237 forms a Glycyl lysine isopeptide (Lys-Gly) (interchain with G-Cter in SUMO1) linkage. Glycyl lysine isopeptide (Lys-Gly) (interchain with G-Cter in SUMO) cross-links involve residues Lys258, Lys282, and Lys286. Residues Cys446 and Cys449 each coordinate Zn(2+). The interval Asp554–Asp650 is disordered. Over residues Ala572–Lys586 the composition is skewed to polar residues. Positions Glu590–Pro603 are enriched in acidic residues. Ser599 is subject to Phosphoserine. Residues Lys618 and Lys630 each participate in a glycyl lysine isopeptide (Lys-Gly) (interchain with G-Cter in SUMO) cross-link. A compositionally biased stretch (acidic residues) spans Pro638 to Asp650.

Belongs to the ubiquitin-activating E1 family. In terms of assembly, heterodimer of sae1 and uba2/sae2. The heterodimer corresponds to the two domains that are encoded on a single polypeptide chain in ubiquitin-activating enzyme E1. Interacts with ube2i. Post-translationally, sumoylated with SUMO1 and SUMO2/3 and by UBC9. Sumoylation at Lys-237 inhibits enzymatic activity. Sumoylation at the C-terminal lysine cluster plays an essential role in nuclear trafficking. As to expression, expressed in eye, brain and pectoral fins.

The protein resides in the cytoplasm. It is found in the nucleus. The protein operates within protein modification; protein sumoylation. The heterodimer acts as an E1 ligase for sumo1, sumo2, and sumo3. It mediates ATP-dependent activation of sumo proteins followed by formation of a thioester bond between a sumo protein and a conserved active site cysteine residue on uba2/sae2. This Danio rerio (Zebrafish) protein is SUMO-activating enzyme subunit 2 (uba2).